We begin with the raw amino-acid sequence, 88 residues long: Small ribosomal subunit protein bS20 (88 aa).

The tract at residues 1 to 20 (MANTAQARKRARQAVVQNAH) is disordered.

This sequence belongs to the bacterial ribosomal protein bS20 family.

Its function is as follows. Binds directly to 16S ribosomal RNA. The chain is Small ribosomal subunit protein bS20 from Ralstonia pickettii (strain 12J).